The primary structure comprises 297 residues: Protoheme IX farnesyltransferase 1 (297 aa).

The next 9 helical transmembrane spans lie at 23–43, 45–65, 93–113, 117–137, 145–165, 171–191, 216–236, 241–261, and 277–297; these read VVVLMLITSLAGMFLATRAGV, WSVLLFGNLGIGLCAGGAAVV, LPALLFALALALLGMVLLLVF, LTAWLTLASLLGYAVLYTGFL, IVIGGLAGAAPPLLGWVAVSG, PLLLVLIIFAWTPPHFWALAI, LHILLYTLILLAVSLLPYAIH, LYLVCALALGLRFLQWAWVLY, and IGYLFALFIALLLDHYLLLNL.

This sequence belongs to the UbiA prenyltransferase family. Protoheme IX farnesyltransferase subfamily.

It is found in the cell inner membrane. The enzyme catalyses heme b + (2E,6E)-farnesyl diphosphate + H2O = Fe(II)-heme o + diphosphate. Its pathway is porphyrin-containing compound metabolism; heme O biosynthesis; heme O from protoheme: step 1/1. Its function is as follows. Converts heme B (protoheme IX) to heme O by substitution of the vinyl group on carbon 2 of heme B porphyrin ring with a hydroxyethyl farnesyl side group. The protein is Protoheme IX farnesyltransferase 1 of Pseudomonas putida (strain ATCC 47054 / DSM 6125 / CFBP 8728 / NCIMB 11950 / KT2440).